Reading from the N-terminus, the 354-residue chain is Fructose-1,6-bisphosphatase class 1 (354 aa).

Mg(2+) contacts are provided by glutamate 112, aspartate 134, leucine 136, and aspartate 137. Residues 137–140, asparagine 229, tyrosine 257, and lysine 287 contribute to the substrate site; that span reads DGSS. Mg(2+) is bound at residue glutamate 293.

The protein belongs to the FBPase class 1 family. As to quaternary structure, homotetramer. Requires Mg(2+) as cofactor.

The protein localises to the cytoplasm. The enzyme catalyses beta-D-fructose 1,6-bisphosphate + H2O = beta-D-fructose 6-phosphate + phosphate. Its pathway is carbohydrate biosynthesis; Calvin cycle. The protein is Fructose-1,6-bisphosphatase class 1 of Trichodesmium erythraeum (strain IMS101).